A 44-amino-acid chain; its full sequence is MDSPAFFFTFFLWFLLLSATGYSIYVSFGPPSKKLRDPFEEHED.

The helical transmembrane segment at 6 to 26 (FFFTFFLWFLLLSATGYSIYV) threads the bilayer.

Belongs to the PsbN family.

The protein resides in the plastid. The protein localises to the chloroplast thylakoid membrane. May play a role in photosystem I and II biogenesis. The chain is Protein PsbN from Tetradesmus obliquus (Green alga).